We begin with the raw amino-acid sequence, 379 residues long: Cytochrome b (379 aa).

4 helical membrane-spanning segments follow: residues 33–53 (FGSL…FLAM), 77–98 (WTIR…FIHV), 113–133 (WNIG…GYVL), and 178–198 (FFAL…IHLL). The heme b site is built by His83 and His97. Heme b-binding residues include His182 and His196. His201 provides a ligand contact to a ubiquinone. The next 4 membrane-spanning stretches (helical) occupy residues 226 to 246 (TKDF…TLFY), 288 to 308 (LGGV…PFLQ), 320 to 340 (LSQF…WIGG), and 347 to 367 (FINI…FIMP).

It belongs to the cytochrome b family. The cytochrome bc1 complex contains 11 subunits: 3 respiratory subunits (MT-CYB, CYC1 and UQCRFS1), 2 core proteins (UQCRC1 and UQCRC2) and 6 low-molecular weight proteins (UQCRH/QCR6, UQCRB/QCR7, UQCRQ/QCR8, UQCR10/QCR9, UQCR11/QCR10 and a cleavage product of UQCRFS1). This cytochrome bc1 complex then forms a dimer. Heme b serves as cofactor.

Its subcellular location is the mitochondrion inner membrane. Its function is as follows. Component of the ubiquinol-cytochrome c reductase complex (complex III or cytochrome b-c1 complex) that is part of the mitochondrial respiratory chain. The b-c1 complex mediates electron transfer from ubiquinol to cytochrome c. Contributes to the generation of a proton gradient across the mitochondrial membrane that is then used for ATP synthesis. The sequence is that of Cytochrome b (MT-CYB) from Lepilemur aeeclis (Sportive lemur).